The sequence spans 47 residues: Small ribosomal subunit protein uS14 (47 aa).

Cysteine 12, cysteine 15, cysteine 30, and cysteine 33 together coordinate Zn(2+).

This sequence belongs to the universal ribosomal protein uS14 family. Zinc-binding uS14 subfamily. Part of the 30S ribosomal subunit. Zn(2+) serves as cofactor.

Its function is as follows. Binds 16S rRNA, required for the assembly of 30S particles. The sequence is that of Small ribosomal subunit protein uS14 from Methanosphaera stadtmanae (strain ATCC 43021 / DSM 3091 / JCM 11832 / MCB-3).